A 286-amino-acid polypeptide reads, in one-letter code: MRLIIVSGRSGSGKSTALNVLEDNGFYCIDNLPASLLPDLAQRALLHTELLHPQVAVSIDARNLPSQLQRFPELLQEVRDNHINCDVLYLDADDETLLKRFSETRRRHPLTTDTRSLAEAIGDESQLLGPIADLADLKLDTTSLNLYQLRDTIKLRLLNKPEPGTAFLVESFGFKRGMPVDADLVFDVRCLPNPYWKPELRDHSGLEPEVREYLAAQPDVEEMYQDIVGYLNKWLPRFAASNRSYVTVAIGCTGGHHRSVYLAERIGAALRESLKNVQIRHRDLNS.

Gly-8–Ser-15 serves as a coordination point for ATP. Asp-60–Asn-63 is a GTP binding site.

This sequence belongs to the RapZ-like family.

In terms of biological role, displays ATPase and GTPase activities. The polypeptide is Nucleotide-binding protein PSPA7_5038 (Pseudomonas paraeruginosa (strain DSM 24068 / PA7) (Pseudomonas aeruginosa (strain PA7))).